The primary structure comprises 186 residues: Large ribosomal subunit protein uL22 (186 aa).

The segment at 159 to 186 is disordered; it reads KATDEEPTKKKLSKKKLQRQKEKMMRSE. Residues 177 to 186 are compositionally biased toward basic and acidic residues; the sequence is RQKEKMMRSE.

Belongs to the universal ribosomal protein uL22 family.

The polypeptide is Large ribosomal subunit protein uL22 (RpL17) (Phlebotomus papatasi (Sandfly)).